A 292-amino-acid polypeptide reads, in one-letter code: MQHLIEKANTLMEALPYIRRFSGKTIVIKYGGHAMSDEALKKSFALDVILLKSLGINTVVVHGGGPQINETLKRYGIVSEFVRGMRVTDAATMQVVEMVLTGQVNKEVVGYLNQHGGRAVGLSGKDGSLLLCRKLLQEVKQGDGSLEKVDIGFVGDVVKVNQELIQTLEHGKFIPVIAPVGVGEDGESYNVNADLVAGRVAGALKAEKLILLTDVEGVKDKAGELIPGIVLDDVPRLIDGGVITGGMIPKVTCCVDAIEEGVKKASIIDGRVLHAVLLEIFTDVGVGTEIRR.

Substrate-binding positions include 64-65, arginine 86, and asparagine 190; that span reads GG.

The protein belongs to the acetylglutamate kinase family. ArgB subfamily.

It is found in the cytoplasm. The catalysed reaction is N-acetyl-L-glutamate + ATP = N-acetyl-L-glutamyl 5-phosphate + ADP. Its pathway is amino-acid biosynthesis; L-arginine biosynthesis; N(2)-acetyl-L-ornithine from L-glutamate: step 2/4. Its function is as follows. Catalyzes the ATP-dependent phosphorylation of N-acetyl-L-glutamate. The polypeptide is Acetylglutamate kinase (Geobacter metallireducens (strain ATCC 53774 / DSM 7210 / GS-15)).